Consider the following 337-residue polypeptide: Eukaryotic translation initiation factor 3 subunit H (337 aa).

The 133-residue stretch at 21–153 folds into the MPN domain; sequence VQCDGLAVMK…LKAYRLTPQA (133 aa).

Belongs to the eIF-3 subunit H family. Component of the eukaryotic translation initiation factor 3 (eIF-3) complex. The eIF-3 complex interacts with pix. Interacts with mxt.

The protein resides in the cytoplasm. In terms of biological role, component of the eukaryotic translation initiation factor 3 (eIF-3) complex, which is involved in protein synthesis of a specialized repertoire of mRNAs and, together with other initiation factors, stimulates binding of mRNA and methionyl-tRNAi to the 40S ribosome. The eIF-3 complex specifically targets and initiates translation of a subset of mRNAs involved in cell proliferation. In Drosophila pseudoobscura pseudoobscura (Fruit fly), this protein is Eukaryotic translation initiation factor 3 subunit H.